Here is a 1549-residue protein sequence, read N- to C-terminus: Structural maintenance of chromosomes protein 4 (1549 aa).

The segment at M1–P78 is disordered. Residues K26–N36 show a composition bias toward basic residues. Residues R37–G59 are compositionally biased toward basic and acidic residues. G121–S128 is an ATP binding site. A coiled-coil region spans residues M326–K604. Basic and acidic residues-rich tracts occupy residues L396–K407 and A420–K444. Disordered regions lie at residues L396–K444 and K460–K485. The SMC hinge domain maps to K619–M734. Coiled coils occupy residues K786–R1058 and E1144–A1182. A compositionally biased stretch (polar residues) spans I1440–D1459. The segment at I1440 to E1549 is disordered. Basic and acidic residues predominate over residues G1460 to S1474. Positions T1510 to K1523 are enriched in polar residues.

The protein belongs to the SMC family. SMC4 subfamily. In terms of assembly, component of the condensin I complex, which contains the mix-1/SMC2 and smc-4/SMC4 heterodimer, and three non SMC subunits that probably regulate the complex: dpy-26, capg-1 and dpy-28. Within the complex, interacts with mix-1, dpy-26, capg-1 and dpy-28. Component of the condensin II complex, which contains the mix-1/SMC2 and smc-4/SMC4 heterodimer, and three non SMC subunits, kle-2, capg-2 and hcp-6 that probably regulate the complex. Within the complex, interacts with mix-1, kle-2, capg-2 and hcp-6. Interacts with smcl-1.

It is found in the nucleus. The protein resides in the chromosome. In terms of biological role, central component of the condensin I complex, a complex required for conversion of interphase chromatin into mitotic-like condense chromosomes. The condensin I complex introduces positive supercoils into relaxed DNA in the presence of type I topoisomerases. Converts nicked DNA into positive knotted forms in the presence of type II topoisomerases. Also a central component of the condensin II complex, a complex that seems to play a role in prophase chromosome condensation. Both the condensin complex I and II play a role in meiotic and mitotic chromosome segregation. Plays a role in robust cytokinesis upon the presence of chromatin obstructions. The polypeptide is Structural maintenance of chromosomes protein 4 (smc-4) (Caenorhabditis elegans).